We begin with the raw amino-acid sequence, 176 residues long: Protein GrpE (176 aa).

Belongs to the GrpE family. In terms of assembly, homodimer.

Its subcellular location is the cytoplasm. Its function is as follows. Participates actively in the response to hyperosmotic and heat shock by preventing the aggregation of stress-denatured proteins, in association with DnaK and GrpE. It is the nucleotide exchange factor for DnaK and may function as a thermosensor. Unfolded proteins bind initially to DnaJ; upon interaction with the DnaJ-bound protein, DnaK hydrolyzes its bound ATP, resulting in the formation of a stable complex. GrpE releases ADP from DnaK; ATP binding to DnaK triggers the release of the substrate protein, thus completing the reaction cycle. Several rounds of ATP-dependent interactions between DnaJ, DnaK and GrpE are required for fully efficient folding. This Meiothermus ruber protein is Protein GrpE.